Consider the following 220-residue polypeptide: 7-cyano-7-deazaguanine synthase (220 aa).

ATP is bound at residue 10 to 20 (FSGGQDSTTCL). Residues Cys-186, Cys-195, Cys-198, and Cys-201 each contribute to the Zn(2+) site.

It belongs to the QueC family. Homodimer. The cofactor is Zn(2+).

It carries out the reaction 7-carboxy-7-deazaguanine + NH4(+) + ATP = 7-cyano-7-deazaguanine + ADP + phosphate + H2O + H(+). Its pathway is purine metabolism; 7-cyano-7-deazaguanine biosynthesis. Catalyzes the ATP-dependent conversion of 7-carboxy-7-deazaguanine (CDG) to 7-cyano-7-deazaguanine (preQ(0)). The sequence is that of 7-cyano-7-deazaguanine synthase from Bacillus cereus (strain B4264).